We begin with the raw amino-acid sequence, 909 residues long: Coatomer subunit beta'-3 (909 aa).

9 WD repeats span residues 13 to 52, 55 to 94, 97 to 136, 140 to 180, 183 to 224, 227 to 266, 269 to 309, 351 to 390, and 461 to 501; these read QRSE…ITKS, VTEL…KVKV, AHSD…ACTQ, GHSH…PNFT, AHQK…CVQT, GHTH…LENT, YGLE…ASMD, TCDL…RSFG, and QIDV…SHFD. Residues 862-909 are disordered; sequence EENGHVENEGDEEEQQEEEVNEEEGVVDADSTDGAVLVNGSEVLTPHP. A compositionally biased stretch (acidic residues) spans 870–892; it reads EGDEEEQQEEEVNEEEGVVDADS.

Belongs to the WD repeat COPB2 family. Oligomeric complex that consists of at least the alpha, beta, beta', gamma, delta, epsilon and zeta subunits.

It localises to the cytoplasm. Its subcellular location is the golgi apparatus membrane. The protein resides in the cytoplasmic vesicle. The protein localises to the COPI-coated vesicle membrane. The coatomer is a cytosolic protein complex that binds to dilysine motifs and reversibly associates with Golgi non-clathrin-coated vesicles, which further mediate biosynthetic protein transport from the ER, via the Golgi up to the trans Golgi network. Coatomer complex is required for budding from Golgi membranes, and is essential for the retrograde Golgi-to-ER transport of dilysine-tagged proteins. The chain is Coatomer subunit beta'-3 from Arabidopsis thaliana (Mouse-ear cress).